Here is a 411-residue protein sequence, read N- to C-terminus: Dual-specificity RNA methyltransferase RlmN (411 aa).

Glu124 serves as the catalytic Proton acceptor. One can recognise a Radical SAM core domain in the interval 130–379 (EEGRGTLCIS…IRTPRGRDIL (250 aa)). The cysteines at positions 137 and 382 are disulfide-linked. Positions 144, 148, and 151 each coordinate [4Fe-4S] cluster. Residues 208-209 (GE), Ser240, 262-264 (SLH), and Asn339 each bind S-adenosyl-L-methionine. The active-site S-methylcysteine intermediate is the Cys382.

Belongs to the radical SAM superfamily. RlmN family. The cofactor is [4Fe-4S] cluster.

It localises to the cytoplasm. The enzyme catalyses adenosine(2503) in 23S rRNA + 2 reduced [2Fe-2S]-[ferredoxin] + 2 S-adenosyl-L-methionine = 2-methyladenosine(2503) in 23S rRNA + 5'-deoxyadenosine + L-methionine + 2 oxidized [2Fe-2S]-[ferredoxin] + S-adenosyl-L-homocysteine. The catalysed reaction is adenosine(37) in tRNA + 2 reduced [2Fe-2S]-[ferredoxin] + 2 S-adenosyl-L-methionine = 2-methyladenosine(37) in tRNA + 5'-deoxyadenosine + L-methionine + 2 oxidized [2Fe-2S]-[ferredoxin] + S-adenosyl-L-homocysteine. Specifically methylates position 2 of adenine 2503 in 23S rRNA and position 2 of adenine 37 in tRNAs. m2A2503 modification seems to play a crucial role in the proofreading step occurring at the peptidyl transferase center and thus would serve to optimize ribosomal fidelity. The protein is Dual-specificity RNA methyltransferase RlmN of Rhizobium meliloti (strain 1021) (Ensifer meliloti).